The sequence spans 229 residues: Peptidase E (229 aa).

Active-site charge relay system residues include Ser120, Asp135, and His157.

Belongs to the peptidase S51 family.

It localises to the cytoplasm. The catalysed reaction is Dipeptidase E catalyzes the hydrolysis of dipeptides Asp-|-Xaa. It does not act on peptides with N-terminal Glu, Asn or Gln, nor does it cleave isoaspartyl peptides.. In terms of biological role, hydrolyzes dipeptides containing N-terminal aspartate residues. May play a role in allowing the cell to use peptide aspartate to spare carbon otherwise required for the synthesis of the aspartate family of amino acids. This chain is Peptidase E, found in Shigella flexneri serotype 5b (strain 8401).